Here is a 537-residue protein sequence, read N- to C-terminus: O-phosphoserine--tRNA(Cys) ligase (537 aa).

Residues 186–188 (HMT), 231–233 (SAS), 273–274 (YY), and asparagine 317 each bind substrate.

Belongs to the class-II aminoacyl-tRNA synthetase family. O-phosphoseryl-tRNA(Cys) synthetase subfamily. As to quaternary structure, homotetramer. Interacts with SepCysS.

It catalyses the reaction tRNA(Cys) + O-phospho-L-serine + ATP = O-phospho-L-seryl-tRNA(Cys) + AMP + diphosphate. In terms of biological role, catalyzes the attachment of O-phosphoserine (Sep) to tRNA(Cys). In Methanococcus maripaludis (strain C6 / ATCC BAA-1332), this protein is O-phosphoserine--tRNA(Cys) ligase.